Reading from the N-terminus, the 494-residue chain is Probable cytosol aminopeptidase (494 aa).

Mn(2+) contacts are provided by lysine 260 and aspartate 265. The active site involves lysine 272. Aspartate 283, aspartate 342, and glutamate 344 together coordinate Mn(2+). The active site involves arginine 346.

This sequence belongs to the peptidase M17 family. Mn(2+) serves as cofactor.

The protein localises to the cytoplasm. The catalysed reaction is Release of an N-terminal amino acid, Xaa-|-Yaa-, in which Xaa is preferably Leu, but may be other amino acids including Pro although not Arg or Lys, and Yaa may be Pro. Amino acid amides and methyl esters are also readily hydrolyzed, but rates on arylamides are exceedingly low.. The enzyme catalyses Release of an N-terminal amino acid, preferentially leucine, but not glutamic or aspartic acids.. In terms of biological role, presumably involved in the processing and regular turnover of intracellular proteins. Catalyzes the removal of unsubstituted N-terminal amino acids from various peptides. The protein is Probable cytosol aminopeptidase of Bacillus thuringiensis (strain Al Hakam).